We begin with the raw amino-acid sequence, 38 residues long: SITNEQILDAIADMSVMQVVELIEAMEEKFGVSAAAAV.

The protein belongs to the bacterial ribosomal protein bL12 family. As to quaternary structure, homodimer. Part of the ribosomal stalk of the 50S ribosomal subunit. Forms a multimeric L10(L12)X complex, where L10 forms an elongated spine to which 2 to 4 L12 dimers bind in a sequential fashion. Binds GTP-bound translation factors.

Forms part of the ribosomal stalk which helps the ribosome interact with GTP-bound translation factors. Is thus essential for accurate translation. The chain is Large ribosomal subunit protein bL12 (rplL) from Salinivibrio costicola (Vibrio costicola).